A 66-amino-acid polypeptide reads, in one-letter code: U1-theraphotoxin-Cg1a 2 (66 aa).

A signal peptide spans 1–21 (MKTSALFVIFGLVLLFCNSFA). A propeptide spanning residues 22 to 29 (AELEMTGR) is cleaved from the precursor. Cystine bridges form between Cys-31/Cys-46, Cys-38/Cys-51, and Cys-45/Cys-58. Pro-63 bears the Proline amide mark.

The protein belongs to the neurotoxin 10 (Hwtx-1) family. 46 (Jztx-7/10/12) subfamily. Expressed by the venom gland.

It is found in the secreted. In terms of biological role, probable ion channel inhibitor. The sequence is that of U1-theraphotoxin-Cg1a 2 from Chilobrachys guangxiensis (Chinese earth tiger tarantula).